The following is a 542-amino-acid chain: Nibrin homolog (542 aa).

The FHA domain maps to 25 to 90; it reads YKVGRKGCDI…YGTFVKTDLG (66 aa). One can recognise a BRCT domain in the interval 119–195; sequence IYRLSLIPLV…KTIILTNWVM (77 aa). Residues 409-430 are disordered; the sequence is SRGHMDEKNSSDSVTIRRDRND. The segment at 465 to 500 is involved in MRE11-binding; it reads VDFKRFRKGNVTCGNSFSSLIPFAKDPYKEYDSWDV.

This sequence belongs to the Nibrin family. As to quaternary structure, component of the MRN complex composed of two heterodimers RAD50 and MRE11 associated with a single NBS1.

Its subcellular location is the nucleus. It is found in the chromosome. Its function is as follows. Component of the MRN complex, which plays a central role in double-strand break (DSB) repair, DNA recombination, maintenance of telomere integrity and meiosis. The MRN complex is involved in the repair of DNA double-strand breaks (DSBs) via homologous recombination (HR), an error-free mechanism which primarily occurs during S and G2 phases. The complex (1) mediates the end resection of damaged DNA, which generates proper single-stranded DNA, a key initial steps in HR, and is (2) required for the recruitment of other repair factors and efficient activation of ATM and ATR upon DNA damage. The MRN complex possesses single-strand endonuclease activity and double-strand-specific 3'-5' exonuclease activity, which are provided by MRE11, to initiate end resection, which is required for single-strand invasion and recombination. Within the MRN complex, NBS1 acts as a protein-protein adapter, which specifically recognizes and binds phosphorylated proteins, promoting their recruitment to DNA damage sites. Recruits MRE11 and RAD50 components of the MRN complex to DSBs in response to DNA damage. The sequence is that of Nibrin homolog from Arabidopsis thaliana (Mouse-ear cress).